The primary structure comprises 231 residues: Equistatin (231 aa).

An N-terminal signal peptide occupies residues 1–32 (MALSQNQAKFSKGFVVMIWVLFIACAITSTEA). Thyroglobulin type-1 domains are found at residues 34-95 (LTKC…SPDC), 102-163 (LTLC…RPTC), and 167-231 (LSEC…RPTC). Disulfide bonds link C37-C56, C67-C74, C76-C95, C105-C124, C135-C142, C144-C163, C170-C191, C202-C209, and C211-C231.

The protein belongs to the protease inhibitor I31 family.

The protein resides in the secreted. Its function is as follows. Potent inhibitor of papain-like cysteine proteinases (Ki=0.18-0.57 nM on papain), as well as of the aspartic proteinase cathepsin D (Ki=0.3-05 nM). In Actinia equina (Beadlet anemone), this protein is Equistatin.